The primary structure comprises 467 residues: A-type ATP synthase subunit B (467 aa).

The interval 95–114 (GKGQPRDHMPLPPPEDFRDV) is disordered.

The protein belongs to the ATPase alpha/beta chains family. Has multiple subunits with at least A(3), B(3), C, D, E, F, H, I and proteolipid K(x).

The protein localises to the cell membrane. Component of the A-type ATP synthase that produces ATP from ADP in the presence of a proton gradient across the membrane. The B chain is a regulatory subunit. This chain is A-type ATP synthase subunit B, found in Pyrobaculum islandicum (strain DSM 4184 / JCM 9189 / GEO3).